A 264-amino-acid chain; its full sequence is Orotidine 5'-phosphate decarboxylase (264 aa).

Residues aspartate 40, 62 to 64, 93 to 102, tyrosine 214, and arginine 233 contribute to the substrate site; these read KTH and DRKFADIGNT. Lysine 95 functions as the Proton donor in the catalytic mechanism.

It belongs to the OMP decarboxylase family.

The enzyme catalyses orotidine 5'-phosphate + H(+) = UMP + CO2. It participates in pyrimidine metabolism; UMP biosynthesis via de novo pathway; UMP from orotate: step 2/2. This Schizosaccharomyces pombe (strain 972 / ATCC 24843) (Fission yeast) protein is Orotidine 5'-phosphate decarboxylase (ura4).